A 157-amino-acid polypeptide reads, in one-letter code: SsrA-binding protein (157 aa).

Residues 134–151 (HDKRETEKKRDWSKEKGR) show a composition bias toward basic and acidic residues. Positions 134–157 (HDKRETEKKRDWSKEKGRLMRAKG) are disordered.

The protein belongs to the SmpB family.

Its subcellular location is the cytoplasm. In terms of biological role, required for rescue of stalled ribosomes mediated by trans-translation. Binds to transfer-messenger RNA (tmRNA), required for stable association of tmRNA with ribosomes. tmRNA and SmpB together mimic tRNA shape, replacing the anticodon stem-loop with SmpB. tmRNA is encoded by the ssrA gene; the 2 termini fold to resemble tRNA(Ala) and it encodes a 'tag peptide', a short internal open reading frame. During trans-translation Ala-aminoacylated tmRNA acts like a tRNA, entering the A-site of stalled ribosomes, displacing the stalled mRNA. The ribosome then switches to translate the ORF on the tmRNA; the nascent peptide is terminated with the 'tag peptide' encoded by the tmRNA and targeted for degradation. The ribosome is freed to recommence translation, which seems to be the essential function of trans-translation. The chain is SsrA-binding protein from Rhodopseudomonas palustris (strain BisA53).